The primary structure comprises 405 residues: Serine/threonine transporter SstT (405 aa).

The next 9 membrane-spanning stretches (helical) occupy residues 13-33 (GNLV…ATFS), 43-63 (IGNL…FILV), 81-101 (IVVL…ILSF), 140-160 (ALMN…GLAL), 191-211 (FGIF…ALAG), 215-235 (LLAV…PMIV), 297-317 (MAGA…TMGI), 338-358 (ASGV…LFGI), and 362-382 (IAMQ…SAET).

It belongs to the dicarboxylate/amino acid:cation symporter (DAACS) (TC 2.A.23) family.

The protein resides in the cell inner membrane. The catalysed reaction is L-serine(in) + Na(+)(in) = L-serine(out) + Na(+)(out). It catalyses the reaction L-threonine(in) + Na(+)(in) = L-threonine(out) + Na(+)(out). Its function is as follows. Involved in the import of serine and threonine into the cell, with the concomitant import of sodium (symport system). This chain is Serine/threonine transporter SstT, found in Vibrio cholerae serotype O1 (strain ATCC 39315 / El Tor Inaba N16961).